A 437-amino-acid polypeptide reads, in one-letter code: UDP-N-acetylmuramate--L-alanine ligase (437 aa).

Residue 114 to 120 coordinates ATP; it reads GTHGKTS.

The protein belongs to the MurCDEF family.

It is found in the cytoplasm. It carries out the reaction UDP-N-acetyl-alpha-D-muramate + L-alanine + ATP = UDP-N-acetyl-alpha-D-muramoyl-L-alanine + ADP + phosphate + H(+). The protein operates within cell wall biogenesis; peptidoglycan biosynthesis. Its function is as follows. Cell wall formation. In Lactobacillus gasseri (strain ATCC 33323 / DSM 20243 / BCRC 14619 / CIP 102991 / JCM 1131 / KCTC 3163 / NCIMB 11718 / NCTC 13722 / AM63), this protein is UDP-N-acetylmuramate--L-alanine ligase.